A 244-amino-acid polypeptide reads, in one-letter code: Phosphonates import ATP-binding protein PhnC (244 aa).

In terms of domain architecture, ABC transporter spans 6–244 (IECHNLETAY…LQAQFVVNSQ (239 aa)). 41–48 (GLNGAGKS) contributes to the ATP binding site.

This sequence belongs to the ABC transporter superfamily. Phosphonates importer (TC 3.A.1.9.1) family. The complex is composed of two ATP-binding proteins (PhnC), two transmembrane proteins (PhnE) and a solute-binding protein (PhnD).

It is found in the cell inner membrane. It catalyses the reaction phosphonate(out) + ATP + H2O = phosphonate(in) + ADP + phosphate + H(+). In terms of biological role, part of the ABC transporter complex PhnCDE involved in phosphonates import. Responsible for energy coupling to the transport system. This Trichormus variabilis (strain ATCC 29413 / PCC 7937) (Anabaena variabilis) protein is Phosphonates import ATP-binding protein PhnC.